A 139-amino-acid polypeptide reads, in one-letter code: Probable disulfide formation protein C 2 (139 aa).

Residues 6–25 traverse the membrane as a helical segment; that stretch reads KYHIAIAWMIATSAMLISLF. Cys-35 and Cys-38 are disulfide-bonded. The next 2 membrane-spanning stretches (helical) occupy residues 40–59 and 66–83; these read YQRM…MYRK and YAFP…YQIT. A disulfide bridge links Cys-95 with Cys-101. A helical membrane pass occupies residues 110–133; it reads GFISIPMLSFIGFLVIIILIYIES.

This sequence belongs to the DsbB family. BdbC subfamily.

It is found in the cell membrane. In terms of biological role, required for disulfide bond formation in some proteins. This Bacillus cereus (strain ATCC 10987 / NRS 248) protein is Probable disulfide formation protein C 2 (bdbC2).